A 149-amino-acid chain; its full sequence is Small ribosomal subunit protein uS13 (149 aa).

Belongs to the universal ribosomal protein uS13 family. As to quaternary structure, part of the 30S ribosomal subunit. Forms a loose heterodimer with protein S19. Forms two bridges to the 50S subunit in the 70S ribosome.

In terms of biological role, located at the top of the head of the 30S subunit, it contacts several helices of the 16S rRNA. In the 70S ribosome it contacts the 23S rRNA (bridge B1a) and protein L5 of the 50S subunit (bridge B1b), connecting the 2 subunits; these bridges are implicated in subunit movement. The chain is Small ribosomal subunit protein uS13 from Thermococcus kodakarensis (strain ATCC BAA-918 / JCM 12380 / KOD1) (Pyrococcus kodakaraensis (strain KOD1)).